We begin with the raw amino-acid sequence, 190 residues long: 3-isopropylmalate dehydratase small subunit (190 aa).

This sequence belongs to the LeuD family. LeuD type 1 subfamily. Heterodimer of LeuC and LeuD.

The enzyme catalyses (2R,3S)-3-isopropylmalate = (2S)-2-isopropylmalate. Its pathway is amino-acid biosynthesis; L-leucine biosynthesis; L-leucine from 3-methyl-2-oxobutanoate: step 2/4. Its function is as follows. Catalyzes the isomerization between 2-isopropylmalate and 3-isopropylmalate, via the formation of 2-isopropylmaleate. In Staphylococcus aureus (strain USA300), this protein is 3-isopropylmalate dehydratase small subunit.